Consider the following 120-residue polypeptide: Large ribosomal subunit protein bL21 (120 aa).

This sequence belongs to the bacterial ribosomal protein bL21 family. As to quaternary structure, part of the 50S ribosomal subunit. Contacts protein L20.

Functionally, this protein binds to 23S rRNA in the presence of protein L20. This chain is Large ribosomal subunit protein bL21, found in Roseiflexus sp. (strain RS-1).